Reading from the N-terminus, the 56-residue chain is Lantibiotic subtilin (56 aa).

Residues 1–24 constitute a propeptide that is removed on maturation; the sequence is MSKFDDFDLDVVKVSKQDSKITPQ. Trp-25 carries the N2-succinyltryptophan; partial modification. Positions 27–31 form a cross-link, lanthionine (Ser-Cys); that stretch reads SESLC. Residue Ser-29 is modified to 2,3-didehydroalanine (Ser). 4 cross-links (beta-methyllanthionine (Thr-Cys)) span residues 32–35, 37–43, 47–50, and 49–52; these read TPGC, TGALQTC, TLTC, and TCNC. Residue Thr-42 is modified to (Z)-2,3-didehydrobutyrine. Ser-55 carries the post-translational modification 2,3-didehydroalanine (Ser).

The protein belongs to the type A lantibiotic family. Maturation of lantibiotics involves the enzymatic conversion of Thr, and Ser into dehydrated AA and the formation of thioether bonds with cysteine. This is followed by membrane translocation and cleavage of the modified precursor. Post-translationally, succinylated subtilin is 10-20 times less active than subtilin. The ratio subtilin/succinylated subtilin is about 1:2 after 24 hours growth. In terms of processing, the 2,3-didehydrobutyrine is determined to be the Z-isomer.

In terms of biological role, lanthionine-containing peptide antibiotic (lantibiotic) active on Gram-positive bacteria. The bactericidal activity of lantibiotics is based on depolarization of energized bacterial cytoplasmic membranes, initiated by the formation of aqueous transmembrane pores. In Bacillus subtilis, this protein is Lantibiotic subtilin (spaS).